Here is a 356-residue protein sequence, read N- to C-terminus: Phospho-N-acetylmuramoyl-pentapeptide-transferase (356 aa).

The next 9 membrane-spanning stretches (helical) occupy residues 27 to 47 (AAAITALLIGLIFGPRFIGWM), 74 to 94 (MGGLMILIAVSISLFLWMDFA), 97 to 117 (YVWACIAVMLGFGVIGFIDDY), 128 to 148 (VSGKVRLLWEFGIAFFACYLI), 164 to 184 (PVIDLGWFYYPFAAFVIVGTA), 201 to 221 (VIIASLAFFVISYVVGNAVFA), 241 to 261 (AIIGAGFAFLWFNAPPAAIFM), 284 to 304 (IVLGIVGGLFVAEALSVIIQV), and 333 to 353 (TVVIRFWIISFALALLGLATL).

Belongs to the glycosyltransferase 4 family. MraY subfamily. It depends on Mg(2+) as a cofactor.

It is found in the cell inner membrane. It catalyses the reaction UDP-N-acetyl-alpha-D-muramoyl-L-alanyl-gamma-D-glutamyl-meso-2,6-diaminopimeloyl-D-alanyl-D-alanine + di-trans,octa-cis-undecaprenyl phosphate = di-trans,octa-cis-undecaprenyl diphospho-N-acetyl-alpha-D-muramoyl-L-alanyl-D-glutamyl-meso-2,6-diaminopimeloyl-D-alanyl-D-alanine + UMP. It participates in cell wall biogenesis; peptidoglycan biosynthesis. In terms of biological role, catalyzes the initial step of the lipid cycle reactions in the biosynthesis of the cell wall peptidoglycan: transfers peptidoglycan precursor phospho-MurNAc-pentapeptide from UDP-MurNAc-pentapeptide onto the lipid carrier undecaprenyl phosphate, yielding undecaprenyl-pyrophosphoryl-MurNAc-pentapeptide, known as lipid I. The sequence is that of Phospho-N-acetylmuramoyl-pentapeptide-transferase from Zymomonas mobilis subsp. mobilis (strain ATCC 31821 / ZM4 / CP4).